We begin with the raw amino-acid sequence, 223 residues long: Uridylate kinase (223 aa).

ATP is bound at residue 9–10; that stretch reads GS. Gly43 contributes to the UMP binding site. Residues Gly44 and Arg48 each coordinate ATP. UMP is bound by residues Asp65 and 112-118; that span reads THPGHTT. ATP contacts are provided by Thr137, Asn138, Tyr143, and Asp146.

The protein belongs to the UMP kinase family. In terms of assembly, homohexamer.

The protein resides in the cytoplasm. The enzyme catalyses UMP + ATP = UDP + ADP. The protein operates within pyrimidine metabolism; CTP biosynthesis via de novo pathway; UDP from UMP (UMPK route): step 1/1. Its activity is regulated as follows. Inhibited by UTP. Its function is as follows. Catalyzes the reversible phosphorylation of UMP to UDP. This is Uridylate kinase from Methanopyrus kandleri (strain AV19 / DSM 6324 / JCM 9639 / NBRC 100938).